A 203-amino-acid polypeptide reads, in one-letter code: MAILLPDLPYAYDALEPYIDAETMTLHHDKHHATYVANANAALEKHPEIGENLEVLLADVEQIPADIRQSLINNGGGHLNHALFWELLSPEKTKVTAEVAAAINEAFGSFDDFKAAFTAAATTRFGSGWAWLVVDKEGKLEVTSTANQDTPISQGLKPILALDVWEHAYYLNYRNVRPNYIKAFFEVINWNTVARLYAEALTK.

Residues His27, His81, Asp163, and His167 each contribute to the Fe(3+) site. Mn(2+)-binding residues include His27, His81, Asp163, and His167.

This sequence belongs to the iron/manganese superoxide dismutase family. Mn(2+) serves as cofactor. It depends on Fe(3+) as a cofactor.

It carries out the reaction 2 superoxide + 2 H(+) = H2O2 + O2. Functionally, destroys superoxide anion radicals which are normally produced within the cells and which are toxic to biological systems. Catalyzes the dismutation of superoxide anion radicals into O2 and H2O2 by successive reduction and oxidation of the transition metal ion at the active site. The protein is Superoxide dismutase [Mn/Fe] (sodA) of Streptococcus mutans serotype c (strain ATCC 700610 / UA159).